The chain runs to 259 residues: Ubiquitin-conjugating enzyme E2 J2 (259 aa).

The Cytoplasmic portion of the chain corresponds to Met-1–His-226. A UBC core domain is found at Thr-12–Glu-162. Catalysis depends on Cys-94, which acts as the Glycyl thioester intermediate. The chain crosses the membrane as a helical; Anchor for type IV membrane protein span at residues Gly-227 to Tyr-247. At Thr-248–Glu-259 the chain is on the lumenal side.

This sequence belongs to the ubiquitin-conjugating enzyme family. In terms of processing, auto-ubiquitinated.

The protein localises to the endoplasmic reticulum membrane. The catalysed reaction is S-ubiquitinyl-[E1 ubiquitin-activating enzyme]-L-cysteine + [E2 ubiquitin-conjugating enzyme]-L-cysteine = [E1 ubiquitin-activating enzyme]-L-cysteine + S-ubiquitinyl-[E2 ubiquitin-conjugating enzyme]-L-cysteine.. It functions in the pathway protein modification; protein ubiquitination. Its function is as follows. Catalyzes the covalent attachment of ubiquitin to other proteins. Seems to function in the selective degradation of misfolded membrane proteins from the endoplasmic reticulum (ERAD). In cooperation with the GATOR2 complex, catalyzes 'Lys-6'-linked ubiquitination of NPRL2. This chain is Ubiquitin-conjugating enzyme E2 J2 (UBE2J2), found in Homo sapiens (Human).